A 273-amino-acid polypeptide reads, in one-letter code: Dermonecrotic toxin LarSicTox-alphaIB1b (273 aa).

Residue His-5 is part of the active site. Mg(2+) contacts are provided by Glu-25 and Asp-27. His-41 serves as the catalytic Nucleophile. 2 disulfide bridges follow: Cys-45–Cys-51 and Cys-47–Cys-190. Asp-85 lines the Mg(2+) pocket. An N-linked (GlcNAc...) asparagine glycan is attached at Asn-250.

Belongs to the arthropod phospholipase D family. Class II subfamily. Requires Mg(2+) as cofactor. In terms of tissue distribution, expressed by the venom gland.

It is found in the secreted. It catalyses the reaction an N-(acyl)-sphingosylphosphocholine = an N-(acyl)-sphingosyl-1,3-cyclic phosphate + choline. The enzyme catalyses an N-(acyl)-sphingosylphosphoethanolamine = an N-(acyl)-sphingosyl-1,3-cyclic phosphate + ethanolamine. It carries out the reaction a 1-acyl-sn-glycero-3-phosphocholine = a 1-acyl-sn-glycero-2,3-cyclic phosphate + choline. The catalysed reaction is a 1-acyl-sn-glycero-3-phosphoethanolamine = a 1-acyl-sn-glycero-2,3-cyclic phosphate + ethanolamine. Functionally, dermonecrotic toxins cleave the phosphodiester linkage between the phosphate and headgroup of certain phospholipids (sphingolipid and lysolipid substrates), forming an alcohol (often choline) and a cyclic phosphate. This toxin acts on sphingomyelin (SM). It may also act on ceramide phosphoethanolamine (CPE), lysophosphatidylcholine (LPC) and lysophosphatidylethanolamine (LPE), but not on lysophosphatidylserine (LPS), and lysophosphatidylglycerol (LPG). It acts by transphosphatidylation, releasing exclusively cyclic phosphate products as second products. Induces dermonecrosis, hemolysis, increased vascular permeability, edema, inflammatory response, and platelet aggregation. The chain is Dermonecrotic toxin LarSicTox-alphaIB1b from Loxosceles arizonica (Arizona brown spider).